We begin with the raw amino-acid sequence, 843 residues long: Protein P (843 aa).

The terminal protein domain (TP) stretch occupies residues Met-1–Gln-177. The spacer stretch occupies residues Glu-178 to Leu-346. Disordered regions lie at residues Lys-228–Pro-259 and Glu-283–Ser-314. The span at Arg-239 to Thr-249 shows a compositional bias: basic residues. Residues Glu-347–Gln-690 form a polymerase/reverse transcriptase domain (RT) region. The Reverse transcriptase domain maps to Gln-357–Ile-600. 3 residues coordinate Mg(2+): Asp-429, Asp-551, and Asp-552.

The protein belongs to the hepadnaviridae P protein family.

It catalyses the reaction DNA(n) + a 2'-deoxyribonucleoside 5'-triphosphate = DNA(n+1) + diphosphate. The enzyme catalyses Endonucleolytic cleavage to 5'-phosphomonoester.. Activated by host HSP70 and HSP40 in vitro to be able to bind the epsilon loop of the pgRNA. Because deletion of the RNase H region renders the protein partly chaperone-independent, the chaperones may be needed indirectly to relieve occlusion of the RNA-binding site by this domain. Inhibited by several reverse-transcriptase inhibitors: Lamivudine, Adefovir and Entecavir. Multifunctional enzyme that converts the viral RNA genome into dsDNA in viral cytoplasmic capsids. This enzyme displays a DNA polymerase activity that can copy either DNA or RNA templates, and a ribonuclease H (RNase H) activity that cleaves the RNA strand of RNA-DNA heteroduplexes in a partially processive 3'- to 5'-endonucleasic mode. Neo-synthesized pregenomic RNA (pgRNA) are encapsidated together with the P protein, and reverse-transcribed inside the nucleocapsid. Initiation of reverse-transcription occurs first by binding the epsilon loop on the pgRNA genome, and is initiated by protein priming, thereby the 5'-end of (-)DNA is covalently linked to P protein. Partial (+)DNA is synthesized from the (-)DNA template and generates the relaxed circular DNA (RC-DNA) genome. After budding and infection, the RC-DNA migrates in the nucleus, and is converted into a plasmid-like covalently closed circular DNA (cccDNA). The activity of P protein does not seem to be necessary for cccDNA generation, and is presumably released from (+)DNA by host nuclear DNA repair machinery. The protein is Protein P of Homo sapiens (Human).